Consider the following 657-residue polypeptide: Katanin p80 WD40 repeat-containing subunit B1 (657 aa).

WD repeat units lie at residues 18-58, 61-100, 103-142, 145-184, 187-226, and 229-269; these read AHSS…CVMS, GHTT…ILRT, GHKA…CIFK, SHTQ…VMFE, GHSG…VVSC, and EEAT…DVVV. Disordered regions lie at residues 318–410 and 423–454; these read NNEL…EDEP and VEVQ…RAEP. Residues 325–345 show a composition bias toward polar residues; that stretch reads PTPTGSSLRRSYDRPSTSCSK. The segment covering 351–385 has biased composition (basic and acidic residues); that stretch reads HSSESERRSPSSEEDRDEKESKAEIQNPEDYKEIF.

It belongs to the WD repeat KATNB1 family. Interacts with KATNA1. This interaction enhances the microtubule binding and severing activity of KATNA1 and also targets this activity to the centrosome.

It is found in the cytoplasm. The protein localises to the cytoskeleton. The protein resides in the microtubule organizing center. Its subcellular location is the centrosome. It localises to the spindle pole. It is found in the spindle. In terms of biological role, participates in a complex which severs microtubules in an ATP-dependent manner. May act to target the enzymatic subunit of this complex to sites of action such as the centrosome. Microtubule severing may promote rapid reorganization of cellular microtubule arrays and the release of microtubules from the centrosome following nucleation. The chain is Katanin p80 WD40 repeat-containing subunit B1 from Gallus gallus (Chicken).